A 144-amino-acid chain; its full sequence is Large ribosomal subunit protein uL11 (144 aa).

It belongs to the universal ribosomal protein uL11 family. As to quaternary structure, part of the ribosomal stalk of the 50S ribosomal subunit. Interacts with L10 and the large rRNA to form the base of the stalk. L10 forms an elongated spine to which L12 dimers bind in a sequential fashion forming a multimeric L10(L12)X complex. One or more lysine residues are methylated.

In terms of biological role, forms part of the ribosomal stalk which helps the ribosome interact with GTP-bound translation factors. In Acidiphilium cryptum (strain JF-5), this protein is Large ribosomal subunit protein uL11.